We begin with the raw amino-acid sequence, 685 residues long: Small ribosomal subunit protein mS39 (685 aa).

Residues 1–10 constitute a mitochondrion transit peptide; sequence MAAAAVAARR. Position 127 is an N6-acetyllysine (lysine 127). PPR repeat units follow at residues 150-184, 185-220, 254-288, 289-329, 330-366, 367-407, 412-446, 454-488, 489-523, and 572-606; these read IEDV…GTTV, SLET…ENLE, NARS…RLSA, DVYT…KVKP, NLQT…GIEP, SLAT…TFSP, DGRF…DNRK, RKVY…VFLP, HYQI…SHTF, and PANP…KKIP. Residues 663 to 685 form a disordered region; that stretch reads LGNLTELNSSDGESSSDSDSDDK. Acidic residues predominate over residues 676-685; it reads SSSDSDSDDK.

This sequence belongs to the mitochondrion-specific ribosomal protein mS39 family. In terms of assembly, component of the mitochondrial ribosome small subunit (28S) which comprises a 12S rRNA and about 30 distinct proteins. Associated with the 12S mitochondrial rRNA (12S mt-rRNA).

The protein resides in the mitochondrion. In terms of biological role, mitochondrial RNA-binding protein that has a role in mitochondrial translation. The chain is Small ribosomal subunit protein mS39 (Ptcd3) from Mus musculus (Mouse).